A 601-amino-acid polypeptide reads, in one-letter code: HMG domain-containing protein 4 (601 aa).

Residue lysine 8 forms a Glycyl lysine isopeptide (Lys-Gly) (interchain with G-Cter in SUMO2) linkage. 2 disordered regions span residues 51–410 and 473–514; these read VRNS…KKKN and TTVK…ASPA. Low complexity predominate over residues 82-93; that stretch reads DYYYGDISSLES. Serine 102 is subject to Phosphoserine. Lysine 191 participates in a covalent cross-link: Glycyl lysine isopeptide (Lys-Gly) (interchain with G-Cter in SUMO2). Position 197 is a phosphoserine (serine 197). Composition is skewed to polar residues over residues 212–221 and 270–282; these read QYPSQQATVK and DASQ…SANL. The segment covering 316-344 has biased composition (basic residues); it reads IKKKKKSKKSKKKKDKEKHKEKRHSKSKR. A compositionally biased stretch (basic and acidic residues) spans 394-404; that stretch reads EEKDKERERGE. Positions 407 to 475 form a DNA-binding region, HMG box; sequence KKKNMSAYQV…KQNKAEATTV (69 aa). Phosphoserine occurs at positions 497, 502, and 512.

It localises to the nucleus. In terms of biological role, negatively regulates Wnt/beta-catenin signaling during development. This chain is HMG domain-containing protein 4 (HMGXB4), found in Homo sapiens (Human).